We begin with the raw amino-acid sequence, 43 residues long: Histone H3 (43 aa).

As to quaternary structure, the nucleosome is a histone octamer containing two molecules each of H2A, H2B, H3 and H4 assembled in one H3-H4 heterotetramer and two H2A-H2B heterodimers. The octamer wraps approximately 147 bp of DNA.

It localises to the nucleus. The protein localises to the chromosome. Functionally, core component of nucleosome. Nucleosomes wrap and compact DNA into chromatin, limiting DNA accessibility to the cellular machineries which require DNA as a template. Histones thereby play a central role in transcription regulation, DNA repair, DNA replication and chromosomal stability. DNA accessibility is regulated via a complex set of post-translational modifications of histones, also called histone code, and nucleosome remodeling. This is Histone H3 from Penaeus vannamei (Whiteleg shrimp).